A 102-amino-acid polypeptide reads, in one-letter code: UPF0473 protein SAS1551 (102 aa).

Belongs to the UPF0473 family.

This is UPF0473 protein SAS1551 from Staphylococcus aureus (strain MSSA476).